The primary structure comprises 197 residues: ATP-dependent Clp protease proteolytic subunit (197 aa).

The active-site Nucleophile is the S98. H123 is a catalytic residue.

It belongs to the peptidase S14 family. In terms of assembly, fourteen ClpP subunits assemble into 2 heptameric rings which stack back to back to give a disk-like structure with a central cavity, resembling the structure of eukaryotic proteasomes.

The protein resides in the cytoplasm. It carries out the reaction Hydrolysis of proteins to small peptides in the presence of ATP and magnesium. alpha-casein is the usual test substrate. In the absence of ATP, only oligopeptides shorter than five residues are hydrolyzed (such as succinyl-Leu-Tyr-|-NHMec, and Leu-Tyr-Leu-|-Tyr-Trp, in which cleavage of the -Tyr-|-Leu- and -Tyr-|-Trp bonds also occurs).. Functionally, cleaves peptides in various proteins in a process that requires ATP hydrolysis. Has a chymotrypsin-like activity. Plays a major role in the degradation of misfolded proteins. This chain is ATP-dependent Clp protease proteolytic subunit, found in Anaplasma phagocytophilum (strain HZ).